The sequence spans 839 residues: DNA (cytosine-5)-methyltransferase CMT3 (839 aa).

Disordered stretches follow at residues 1 to 38 (MAPK…EPVT) and 51 to 86 (LDEP…KTKD). Positions 19–30 (PKPKKRAPKRAK) are enriched in basic residues. The segment covering 51 to 70 (LDEPIPESEAKSTWPDRYKP) has biased composition (basic and acidic residues). The region spanning 108–227 (QIYELNDDAY…LPYDTFEAIQ (120 aa)) is the BAH domain. The 545-residue stretch at 269–813 (ATLLDLYSGC…YALGTAFQGL (545 aa)) folds into the SAM-dependent MTase C5-type domain. Residues 382-447 (FTVDKIVGIS…LGYKSGILPL (66 aa)) enclose the Chromo domain. Residue Cys-460 is part of the active site.

Belongs to the class I-like SAM-binding methyltransferase superfamily. C5-methyltransferase family. Homodimer. Interacts with HP1 and, through its chromodomain, with the N-terminal tail of histone H3 doubly methylated at 'Lys-9' and 'Lys-27'. Binds to JMJ24. In terms of processing, ubiquitinated by JMJ24, subsequently beingargeted to proteasomal degradation thus initiating the destabilization of the heterochromatic state of endogenous silenced loci.

It is found in the nucleus. The enzyme catalyses a 2'-deoxycytidine in DNA + S-adenosyl-L-methionine = a 5-methyl-2'-deoxycytidine in DNA + S-adenosyl-L-homocysteine + H(+). Involved in the CpXpG methylation (e.g. CHG cytosine) and in gene silencing. Methylates preferentially transposon-related sequences. Functionally redundant to DRM1/DRM2 to maintain non-CpG methylation. Involved in RNA-directed DNA methylation. In Arabidopsis thaliana (Mouse-ear cress), this protein is DNA (cytosine-5)-methyltransferase CMT3.